We begin with the raw amino-acid sequence, 98 residues long: Small ribosomal subunit protein bS20 (98 aa).

Belongs to the bacterial ribosomal protein bS20 family.

Its function is as follows. Binds directly to 16S ribosomal RNA. The chain is Small ribosomal subunit protein bS20 from Synechococcus elongatus (strain ATCC 33912 / PCC 7942 / FACHB-805) (Anacystis nidulans R2).